Reading from the N-terminus, the 90-residue chain is Small ribosomal subunit protein bS20 (90 aa).

Residues 1-11 are compositionally biased toward basic residues; that stretch reads MAHHKSAKKRI. A disordered region spans residues 1-22; sequence MAHHKSAKKRIRQTERRTEVNR. Residues 12–22 are compositionally biased toward basic and acidic residues; sequence RQTERRTEVNR.

Belongs to the bacterial ribosomal protein bS20 family.

Functionally, binds directly to 16S ribosomal RNA. The protein is Small ribosomal subunit protein bS20 of Paramagnetospirillum magneticum (strain ATCC 700264 / AMB-1) (Magnetospirillum magneticum).